Reading from the N-terminus, the 119-residue chain is Ribonuclease P protein component (119 aa).

The protein belongs to the RnpA family. In terms of assembly, consists of a catalytic RNA component (M1 or rnpB) and a protein subunit.

It catalyses the reaction Endonucleolytic cleavage of RNA, removing 5'-extranucleotides from tRNA precursor.. RNaseP catalyzes the removal of the 5'-leader sequence from pre-tRNA to produce the mature 5'-terminus. It can also cleave other RNA substrates such as 4.5S RNA. The protein component plays an auxiliary but essential role in vivo by binding to the 5'-leader sequence and broadening the substrate specificity of the ribozyme. This chain is Ribonuclease P protein component, found in Erwinia tasmaniensis (strain DSM 17950 / CFBP 7177 / CIP 109463 / NCPPB 4357 / Et1/99).